The sequence spans 264 residues: MKIGFYNIQGGTGKTTVAANFAYILSQSVKTILIDCDIYGGTTAVLFGLEDKEHNLNTYLAGDSAIEDIIYHYDDLAIIHTDVSSKVFGYKSDLNRFETLVKELEEEYDVIIYDFPPNITEDNPLIGYVGEFELVNKVVVVGEDSIPSIVNSLKTIELITDLGIGLTGIIVNKYRGLTDISEIIDDVIGVLPYDQNVERQWVESTPIVKIKTKFTKEMTALANEIASIYLEKDLASLRALRLAKAISELTEVEKSEKDFEDYLE.

8–15 is an ATP binding site; sequence IQGGTGKT.

This is an uncharacterized protein from Methanocaldococcus jannaschii (strain ATCC 43067 / DSM 2661 / JAL-1 / JCM 10045 / NBRC 100440) (Methanococcus jannaschii).